The following is a 428-amino-acid chain: Serine--tRNA ligase (428 aa).

Residue Thr-236–Glu-238 coordinates L-serine. Arg-267 to Glu-269 lines the ATP pocket. Residue Glu-290 coordinates L-serine. Glu-354–Ser-357 contacts ATP. L-serine is bound at residue Ser-388.

It belongs to the class-II aminoacyl-tRNA synthetase family. Type-1 seryl-tRNA synthetase subfamily. In terms of assembly, homodimer. The tRNA molecule binds across the dimer.

It localises to the cytoplasm. It catalyses the reaction tRNA(Ser) + L-serine + ATP = L-seryl-tRNA(Ser) + AMP + diphosphate + H(+). The catalysed reaction is tRNA(Sec) + L-serine + ATP = L-seryl-tRNA(Sec) + AMP + diphosphate + H(+). The protein operates within aminoacyl-tRNA biosynthesis; selenocysteinyl-tRNA(Sec) biosynthesis; L-seryl-tRNA(Sec) from L-serine and tRNA(Sec): step 1/1. Catalyzes the attachment of serine to tRNA(Ser). Is also able to aminoacylate tRNA(Sec) with serine, to form the misacylated tRNA L-seryl-tRNA(Sec), which will be further converted into selenocysteinyl-tRNA(Sec). The chain is Serine--tRNA ligase from Psychrobacter cryohalolentis (strain ATCC BAA-1226 / DSM 17306 / VKM B-2378 / K5).